The following is a 282-amino-acid chain: MLRAASSLFRFRVAGMVALSCVFGYLLAAGAAGPDMVTSAAGTFLLTCACSVFNQIQEKDLDARMPRTRNRPVASGRLPTTAARAVGMAALLPALILLHAAGGVRLVLLSAAVLALYNGVYTPMKKYTAFSLLAGAVPGALPPVFGWLAAGGNLYSPEIALLFIVYYLWQVPHFWLRAERDRQSYLAAGLPLPSVELPHRYHALLRLWYASYMVALLLLPVFPFIAETAVRIAVCLAGITGLAASGYLLASPVRGFHAVNVSMLFVMLLLVVDRLVTSGIIT.

A run of 9 helical transmembrane segments spans residues 13 to 33, 36 to 56, 74 to 96, 101 to 120, 129 to 149, 156 to 176, 207 to 227, 232 to 252, and 261 to 281; these read VAGM…GAAG, MVTS…FNQI, ASGR…PALI, AGGV…YNGV, AFSL…GWLA, SPEI…HFWL, LWYA…FIAE, IAVC…LASP, and VSML…SGII.

Belongs to the UbiA prenyltransferase family. Protoheme IX farnesyltransferase subfamily.

The protein localises to the cell inner membrane. The enzyme catalyses heme b + (2E,6E)-farnesyl diphosphate + H2O = Fe(II)-heme o + diphosphate. It participates in porphyrin-containing compound metabolism; heme O biosynthesis; heme O from protoheme: step 1/1. In terms of biological role, converts heme B (protoheme IX) to heme O by substitution of the vinyl group on carbon 2 of heme B porphyrin ring with a hydroxyethyl farnesyl side group. This is Protoheme IX farnesyltransferase from Oleidesulfovibrio alaskensis (strain ATCC BAA-1058 / DSM 17464 / G20) (Desulfovibrio alaskensis).